The chain runs to 581 residues: Arginine--tRNA ligase (581 aa).

The 'HIGH' region motif lies at 122 to 132 (PNVAKPMHVGH).

The protein belongs to the class-I aminoacyl-tRNA synthetase family. As to quaternary structure, monomer.

It is found in the cytoplasm. It carries out the reaction tRNA(Arg) + L-arginine + ATP = L-arginyl-tRNA(Arg) + AMP + diphosphate. The protein is Arginine--tRNA ligase of Francisella tularensis subsp. tularensis (strain WY96-3418).